Here is a 200-residue protein sequence, read N- to C-terminus: Ras-related protein Rab-7b (200 aa).

Residues 15 to 22, 34 to 40, 63 to 67, 124 to 127, and 154 to 155 contribute to the GTP site; these read GALGVGKT, YEDYQTT, DTGGQ, NKID, and AK. 2 short sequence motifs (switch) span residues 28 to 41 and 67 to 82; these read YVHK…QTTL and QERF…KGSD. Phosphoserine is present on Ser186. Residues Cys199 and Cys200 are each lipidated (S-geranylgeranyl cysteine).

The protein belongs to the small GTPase superfamily. Rab family.

The protein resides in the late endosome. Its subcellular location is the lysosome. The protein localises to the golgi apparatus. It localises to the trans-Golgi network. It is found in the cytoplasmic vesicle. The protein resides in the phagosome. Its subcellular location is the phagosome membrane. In terms of biological role, controls vesicular trafficking from endosomes to the trans-Golgi network (TGN). Acts as a negative regulator of TLR9 signaling and can suppress TLR9-triggered TNFA, IL6, and IFNB production in macrophages by promoting TLR9 lysosomal degradation. Also negatively regulates TLR4 signaling in macrophages by promoting lysosomal degradation of TLR4. Promotes megakaryocytic differentiation by increasing NF-kappa-B-dependent IL6 production and subsequently enhancing the association of STAT3 with GATA1. Not involved in the regulation of the EGF- and EGFR degradation pathway. This chain is Ras-related protein Rab-7b (RAB7B), found in Bos taurus (Bovine).